We begin with the raw amino-acid sequence, 352 residues long: Phospho-N-acetylmuramoyl-pentapeptide-transferase (352 aa).

Transmembrane regions (helical) follow at residues Tyr-16–Met-36, Thr-66–Ala-86, Leu-88–Leu-108, Met-129–Glu-149, Pro-160–Ser-180, Gly-191–Ala-211, Ser-228–Phe-248, Leu-255–Ile-275, Phe-280–Ile-300, and Lys-329–Leu-349.

It belongs to the glycosyltransferase 4 family. MraY subfamily. Requires Mg(2+) as cofactor.

The protein localises to the cell inner membrane. The enzyme catalyses UDP-N-acetyl-alpha-D-muramoyl-L-alanyl-gamma-D-glutamyl-meso-2,6-diaminopimeloyl-D-alanyl-D-alanine + di-trans,octa-cis-undecaprenyl phosphate = di-trans,octa-cis-undecaprenyl diphospho-N-acetyl-alpha-D-muramoyl-L-alanyl-D-glutamyl-meso-2,6-diaminopimeloyl-D-alanyl-D-alanine + UMP. It functions in the pathway cell wall biogenesis; peptidoglycan biosynthesis. In terms of biological role, catalyzes the initial step of the lipid cycle reactions in the biosynthesis of the cell wall peptidoglycan: transfers peptidoglycan precursor phospho-MurNAc-pentapeptide from UDP-MurNAc-pentapeptide onto the lipid carrier undecaprenyl phosphate, yielding undecaprenyl-pyrophosphoryl-MurNAc-pentapeptide, known as lipid I. This chain is Phospho-N-acetylmuramoyl-pentapeptide-transferase, found in Wolinella succinogenes (strain ATCC 29543 / DSM 1740 / CCUG 13145 / JCM 31913 / LMG 7466 / NCTC 11488 / FDC 602W) (Vibrio succinogenes).